We begin with the raw amino-acid sequence, 142 residues long: Large ribosomal subunit protein uL13 (142 aa).

It belongs to the universal ribosomal protein uL13 family. As to quaternary structure, part of the 50S ribosomal subunit.

Its function is as follows. This protein is one of the early assembly proteins of the 50S ribosomal subunit, although it is not seen to bind rRNA by itself. It is important during the early stages of 50S assembly. The protein is Large ribosomal subunit protein uL13 of Pseudomonas fluorescens (strain ATCC BAA-477 / NRRL B-23932 / Pf-5).